A 496-amino-acid polypeptide reads, in one-letter code: Glycerol kinase 2 (496 aa).

An ADP-binding site is contributed by T11. ATP is bound by residues T11, T12, and S13. T11 provides a ligand contact to sn-glycerol 3-phosphate. An ADP-binding site is contributed by R15. Residues R81, E82, Y133, and D242 each coordinate sn-glycerol 3-phosphate. R81, E82, Y133, D242, and Q243 together coordinate glycerol. ADP contacts are provided by T264 and G307. T264, G307, Q311, and G408 together coordinate ATP. ADP is bound by residues G408 and N412.

Belongs to the FGGY kinase family.

It carries out the reaction glycerol + ATP = sn-glycerol 3-phosphate + ADP + H(+). Its pathway is polyol metabolism; glycerol degradation via glycerol kinase pathway; sn-glycerol 3-phosphate from glycerol: step 1/1. Its activity is regulated as follows. Inhibited by fructose 1,6-bisphosphate (FBP). In terms of biological role, key enzyme in the regulation of glycerol uptake and metabolism. Catalyzes the phosphorylation of glycerol to yield sn-glycerol 3-phosphate. This Thermotoga maritima (strain ATCC 43589 / DSM 3109 / JCM 10099 / NBRC 100826 / MSB8) protein is Glycerol kinase 2.